Here is a 507-residue protein sequence, read N- to C-terminus: Dihydrolipoyllysine-residue acetyltransferase component of pyruvate dehydrogenase complex, mitochondrial (507 aa).

A Lipoyl-binding domain is found at 77–153; the sequence is HNRVALPALS…PIGKLLCIIV (77 aa). The residue at position 118 (lysine 118) is an N6-lipoyllysine. Disordered stretches follow at residues 168–223 and 248–270; these read DGAS…VSAS and RILA…TQAV. A Peripheral subunit-binding (PSBD) domain is found at 221 to 258; the sequence is SASPFAKKLAAENGLDLSGVSGSGPGGRILASDLSQAP. Catalysis depends on residues histidine 480 and aspartate 484.

This sequence belongs to the 2-oxoacid dehydrogenase family. Requires (R)-lipoate as cofactor.

It is found in the mitochondrion matrix. The enzyme catalyses N(6)-[(R)-dihydrolipoyl]-L-lysyl-[protein] + acetyl-CoA = N(6)-[(R)-S(8)-acetyldihydrolipoyl]-L-lysyl-[protein] + CoA. Its function is as follows. The pyruvate dehydrogenase complex catalyzes the overall conversion of pyruvate to acetyl-CoA and CO(2). It contains multiple copies of three enzymatic components: pyruvate dehydrogenase (E1), dihydrolipoamide acetyltransferase (E2) and lipoamide dehydrogenase (E3). This chain is Dihydrolipoyllysine-residue acetyltransferase component of pyruvate dehydrogenase complex, mitochondrial, found in Caenorhabditis elegans.